Consider the following 1337-residue polypeptide: ABC transporter D family member 1 (1337 aa).

Helical transmembrane passes span 24–44 (ILLA…KSRV), 142–162 (APLF…LSTL), 247–267 (YASP…GTAI), and 342–362 (FLLK…PFFS). In terms of domain architecture, ABC transmembrane type-1 1 spans 117–395 (VFRTALSNRL…SVIISLFQAL (279 aa)). The 248-residue stretch at 448 to 695 (VEFSDVKVVT…DAMVVQRAFA (248 aa)) folds into the ABC transporter 1 domain. 481 to 488 (GPNGSGKS) serves as a coordination point for ATP. The ABC transmembrane type-1 2 domain maps to 751 to 1049 (LIPTIFDKQG…VVSQSFMAFG (299 aa)). Residues 900–920 (LLTGQRGVAILYTYMLLGLGF) traverse the membrane as a helical segment. The ABC transporter 2 domain maps to 1091-1337 (LDSQDLLSFS…ELRSIEQTTE (247 aa)). An ATP-binding site is contributed by 1130-1137 (GPNGSGKT).

Belongs to the ABC transporter superfamily. ABCD family. Peroxisomal fatty acyl CoA transporter (TC 3.A.1.203) subfamily.

The protein localises to the peroxisome membrane. It is found in the glyoxysome membrane. The enzyme catalyses an acyl-CoA(out) + ATP + H2O = an acyl-CoA(in) + ADP + phosphate + H(+). Its function is as follows. Contributes to the transport of fatty acids and their derivatives (acyl CoAs) across the peroxisomal membrane. Provides acetate to the glyoxylate cycle in developing seedlings. Involved in pollen tube elongation, ovule fertilization, and seeds germination after imbibition (controls the switch between the opposing developmental programs of dormancy and germination), probably by promoting beta-oxidation of storage lipids during gluconeogenesis. Required for biosynthesis of jasmonic acid and conversion of indole butyric acid to indole acetic acid. Confers sensitivity to monofluoroacetic acid (FAc), a toxic acetate analog, and to 2,4-dichlorophenoxybutyric acid (2,4-DB) and indole-3-butyric acid (IBA), two precursors of auxin after beta-oxidation. This is ABC transporter D family member 1 from Arabidopsis thaliana (Mouse-ear cress).